The chain runs to 4318 residues: Cytoplasmic dynein 2 heavy chain 1 (4318 aa).

A stem region spans residues 1-1658 (MPAEDARKEY…IMRMVDAEFQ (1658 aa)). 147–154 (LKSLVRKQ) lines the ATP pocket. Coiled coils occupy residues 1328–1354 (DKATIWEQRLADLDEYLQNLNQIQRKW) and 1402–1431 (LRTTLTTLLDQLQRCQKALNEFLEEKRSIL). AAA regions lie at residues 1659-1883 (YTYE…VLRG), 1951-2171 (DAIR…RQGD), 2261-2515 (ASDF…WVLG), and 2623-2871 (TFAR…SSSV). 1697-1704 (GPAGTGKT) is an ATP binding site. The stretch at 1959-1986 (EHNLVVMETQVKKALELYEQLRQRMGVV) forms a coiled coil. ATP contacts are provided by residues 1989-1996 (GPSGSGKS), 2301-2308 (GPDGCGKG), and 2661-2668 (GRSGVGRR). Positions 2888–3176 (DVYRRKKQGV…YELEKEQETI (289 aa)) are stalk. Coiled-coil stretches lie at residues 2908–2989 (VAKL…AEIE) and 3423–3480 (QHEK…KTKE). 2 AAA regions span residues 3251–3487 (LSTE…TITQ) and 3699–3914 (MTFF…IIDR).

Belongs to the dynein heavy chain family. The cytoplasmic dynein complex 2 is probably composed by a heavy chain DYH1B homodimer and a number of light intermediate chains.

Its subcellular location is the cytoplasm. The protein localises to the cytoskeleton. The protein resides in the cilium axoneme. It localises to the cell membrane. Its function is as follows. May function as a motor for intraflagellar retrograde transport. Functions in cilia biogenesis. This is Cytoplasmic dynein 2 heavy chain 1 (DYH1B) from Tripneustes gratilla (Hawaian sea urchin).